Here is a 430-residue protein sequence, read N- to C-terminus: Trigger factor (430 aa).

A PPIase FKBP-type domain is found at 163 to 248 (GDVVDVDYKG…LNSIKTSILP (86 aa)).

The protein belongs to the FKBP-type PPIase family. Tig subfamily.

It is found in the cytoplasm. It carries out the reaction [protein]-peptidylproline (omega=180) = [protein]-peptidylproline (omega=0). Functionally, involved in protein export. Acts as a chaperone by maintaining the newly synthesized protein in an open conformation. Functions as a peptidyl-prolyl cis-trans isomerase. This Lawsonia intracellularis (strain PHE/MN1-00) protein is Trigger factor.